The chain runs to 326 residues: MLTFARQQQRRNVRWLLSLSLLVLLATLLSLCAGEQWIAPGDWLSARGELFVWQIRLPRTLAVLLVGAALALSGAVMQALFENPLAEPGLLGVSNGAGVGLIAAVLLGQGQLPGWALGLCAIAGALIITLILLRFARRHLSTSRLLLAGVALGIICSALMTWAIYFSTSFDLRQLMYWMMGGFGGVDWQQSWLMIALIPVLIWICCQSQPLNMLALGETSARQLGLPLWFWRNLLVVATGWMVGVSVAMAGAIGFIGLVIPHILRLCGLTDHRVLLPGCALAGAIALLLADVVARLALASAELPIGVVTATLGAPVFIWLLLKSAR.

The next 9 helical transmembrane spans lie at 15–35 (WLLS…CAGE), 61–81 (LAVL…QALF), 88–108 (PGLL…VLLG), 112–132 (LPGW…TLIL), 146–166 (LLAG…AIYF), 184–204 (GGVD…LIWI), 240–260 (GWMV…GLVI), 274–294 (VLLP…DVVA), and 302–322 (ELPI…WLLL).

The protein belongs to the binding-protein-dependent transport system permease family. FecCD subfamily. In terms of assembly, the complex is composed of two ATP-binding proteins (BtuD), two transmembrane proteins (BtuC) and a solute-binding protein (BtuF).

The protein localises to the cell inner membrane. Part of the ABC transporter complex BtuCDF involved in vitamin B12 import. Involved in the translocation of the substrate across the membrane. This is Vitamin B12 import system permease protein BtuC from Salmonella agona (strain SL483).